We begin with the raw amino-acid sequence, 465 residues long: E3 ubiquitin-protein ligase parkin (465 aa).

Positions 1-76 constitute a Ubiquitin-like domain; the sequence is MIVFVRFNSS…VHIVQRPQRK (76 aa). A Phosphoserine; by PINK1 modification is found at serine 65. The interval 71-96 is disordered; that stretch reads QRPQRKSHETNASGGDKPQSTPEGSI. Residues 77–237 are necessary for PINK1-dependent localization to mitochondria; the sequence is SHETNASGGD…LITNNSRSIP (161 aa). Threonine 80 is subject to Phosphothreonine. Residues 80 to 93 are compositionally biased toward polar residues; it reads TNASGGDKPQSTPE. The segment at 141 to 225 adopts an RING-type 0; atypical zinc-finger fold; it reads PTYHSFFVYC…PTSDKDTSVA (85 aa). Threonine 175 carries the post-translational modification Phosphothreonine; by PINK1. The tract at residues 204–238 is SYT11 binding 1; sequence TRAEFFFKCGAHPTSDKDTSVALNLITNNSRSIPC. Threonine 217 carries the phosphothreonine modification. The tract at residues 234 to 465 is TRIAD supradomain; sequence RSIPCIACTD…ACMGDHWFDV (232 aa). Zn(2+) is bound by residues cysteine 238, cysteine 241, cysteine 253, histidine 257, cysteine 260, cysteine 263, cysteine 289, cysteine 293, cysteine 332, and cysteine 337. Residues 238–293 form an RING-type 1 zinc finger; it reads CIACTDVRNPVLVFQCNHRHVICLDCFHLYCVTRLNDRQFVHDAQLGYSLPCVAGC. An SYT11 binding 2 region spans residues 257–293; that stretch reads HVICLDCFHLYCVTRLNDRQFVHDAQLGYSLPCVAGC. The IBR-type zinc-finger motif lies at 313-377; sequence NRYQQYGAEE…CKEAYHEGEC (65 aa). Lysine 349 is covalently cross-linked (Glycyl lysine isopeptide (Lys-Gly) (interchain with G-Cter in ISG15)). Positions 352, 360, 365, and 368 each coordinate Zn(2+). Lysine 369 participates in a covalent cross-link: Glycyl lysine isopeptide (Lys-Gly) (interchain with G-Cter in ISG15). Histidine 373 and cysteine 377 together coordinate Zn(2+). Residues 378 to 410 form an REP region; that stretch reads DSMFEASGATSQAYRVDQRAAEQARWEEASKET. Zn(2+)-binding residues include cysteine 418 and cysteine 421. The RING-type 2; atypical zinc-finger motif lies at 418 to 449; sequence CPRCNVPIEKNGGCMHMKCPQPQCKLEWCWNC. Cysteine 431 is an active-site residue. 6 residues coordinate Zn(2+): cysteine 436, cysteine 441, cysteine 446, cysteine 449, cysteine 457, and histidine 461.

This sequence belongs to the RBR family. Parkin subfamily. As to quaternary structure, forms an E3 ubiquitin ligase complex with UBE2L3 or UBE2L6. Mediates 'Lys-63'-linked polyubiquitination by associating with UBE2V1. Part of a SCF-like complex, consisting of PRKN, CUL1 and FBXW7. Interacts with SNCAIP. Binds to the C2A and C2B domains of SYT11. Interacts and regulates the turnover of SEPTIN5. Part of a complex, including STUB1, HSP70 and GPR37. The amount of STUB1 in the complex increases during ER stress. STUB1 promotes the dissociation of HSP70 from PRKN and GPR37, thus facilitating PRKN-mediated GPR37 ubiquitination. HSP70 transiently associates with unfolded GPR37 and inhibits the E3 activity of PRKN, whereas, STUB1 enhances the E3 activity of PRKN through promotion of dissociation of HSP70 from PRKN-GPR37 complexes. Interacts with PSMD4 and PACRG. Interacts with LRRK2. Interacts with RANBP2. Interacts with SUMO1 but not SUMO2, which promotes nuclear localization and autoubiquitination. Interacts (via first RING-type domain) with AIMP2 (via N-terminus). Interacts with PSMA7 and RNF41. Interacts with PINK1. Forms a complex with PINK1 and PARK7. Interacts with CHPF, the interaction with isoform 2 may facilitate PRKN transport into the mitochondria. Interacts with MFN2 (phosphorylated), promotes PRKN localization in dysfunctional depolarized mitochondria. Interacts with FBXO7; this promotes translocation to dysfunctional depolarized mitochondria. Interacts with ZNF746. Interacts with heat shock protein 70 family members, including HSPA1L, HSPA1A and HSPA8; interaction HSPA1L promotes translocation to damaged mitochondria. Interacts with BAG4 and, to a lesser extent, BAG5; interaction with BAG4 inhibits translocation to damaged mitochondria. Forms a complex with PRKN and PARK7. Interacts with AMBRA1. Auto-ubiquitinates in an E2-dependent manner leading to its own degradation. Also polyubiquitinated by RNF41 for proteasomal degradation. Post-translationally, S-nitrosylated. In terms of processing, phosphorylated. Activation requires phosphorylation at Ser-65 by PINK1 and binding to PINK1 phosphorylated ubiquitin. Phosphorylation at Thr-175 by PINK1 and at Thr-217 is important for mitochondrial localization. As to expression, largely confined to neuronal elements, including fibers and neuropil. Highly expressed at the forebrain level, in pyramidal cells of layer V, in various cortical regions and cerebellum. Expressed in the nucleus of diagonal band of Broca, nucleus basalis, bed nucleus of the stria terminalis, and olfactory tubercle. Moderate expression is seen in most neurons of the subthalamic nucleus, heart, skeletal muscle and testis. Moderate expression was found in frontal cortex, parietal cortex, cerebellum, heart, skeletal muscle and testis.

The protein resides in the cytoplasm. It is found in the cytosol. Its subcellular location is the nucleus. The protein localises to the endoplasmic reticulum. It localises to the mitochondrion. The protein resides in the mitochondrion outer membrane. It is found in the cell projection. Its subcellular location is the neuron projection. The protein localises to the postsynaptic density. It localises to the presynapse. The catalysed reaction is [E2 ubiquitin-conjugating enzyme]-S-ubiquitinyl-L-cysteine + [acceptor protein]-L-lysine = [E2 ubiquitin-conjugating enzyme]-L-cysteine + [acceptor protein]-N(6)-ubiquitinyl-L-lysine.. It participates in protein modification; protein ubiquitination. With respect to regulation, in the autoinhibited state the side chain of Phe-463 inserts into a hydrophobic groove in RING-0, occluding the ubiquitin acceptor site Cys-431, whereas the REP repressor element binds RING-1 and blocks its E2-binding site. Activation of PRKN requires 2 steps: (1) phosphorylation at Ser-65 by PINK1 and (2) binding to phosphorylated ubiquitin, leading to unlock repression of the catalytic Cys-431 by the RING-0 region via an allosteric mechanism and converting PRKN to its fully-active form. According to another report, phosphorylation at Ser-65 by PINK1 is not essential for activation and only binding to phosphorylated ubiquitin is essential to unlock repression. In addition, ISG15 conjugation positively regulates its ubiquitin E3 ligase activity by suppressing the intramolecular interaction that maintains its autoinhibited conformation. Functions within a multiprotein E3 ubiquitin ligase complex, catalyzing the covalent attachment of ubiquitin moieties onto substrate proteins. Substrates include SYT11 and VDAC1. Other substrates are BCL2, CCNE1, GPR37, RHOT1/MIRO1, MFN1, MFN2, STUB1, SNCAIP, SEPTIN5, TOMM20, USP30, ZNF746, MIRO1 and AIMP2. Mediates monoubiquitination as well as 'Lys-6', 'Lys-11', 'Lys-48'-linked and 'Lys-63'-linked polyubiquitination of substrates depending on the context. Participates in the removal and/or detoxification of abnormally folded or damaged protein by mediating 'Lys-63'-linked polyubiquitination of misfolded proteins such as PARK7: 'Lys-63'-linked polyubiquitinated misfolded proteins are then recognized by HDAC6, leading to their recruitment to aggresomes, followed by degradation. Mediates 'Lys-63'-linked polyubiquitination of a 22 kDa O-linked glycosylated isoform of SNCAIP, possibly playing a role in Lewy-body formation. Mediates monoubiquitination of BCL2, thereby acting as a positive regulator of autophagy. Protects against mitochondrial dysfunction during cellular stress, by acting downstream of PINK1 to coordinate mitochondrial quality control mechanisms that remove and replace dysfunctional mitochondrial components. Depending on the severity of mitochondrial damage and/or dysfunction, activity ranges from preventing apoptosis and stimulating mitochondrial biogenesis to regulating mitochondrial dynamics and eliminating severely damaged mitochondria via mitophagy. Activation and recruitment onto the outer membrane of damaged/dysfunctional mitochondria (OMM) requires PINK1-mediated phosphorylation of both PRKN and ubiquitin. After mitochondrial damage, functions with PINK1 to mediate the decision between mitophagy or preventing apoptosis by inducing either the poly- or monoubiquitination of VDAC1, respectively; polyubiquitination of VDAC1 promotes mitophagy, while monoubiquitination of VDAC1 decreases mitochondrial calcium influx which ultimately inhibits apoptosis. When cellular stress results in irreversible mitochondrial damage, promotes the autophagic degradation of dysfunctional depolarized mitochondria (mitophagy) by promoting the ubiquitination of mitochondrial proteins such as TOMM20, RHOT1/MIRO1, MFN1 and USP30. Preferentially assembles 'Lys-6'-, 'Lys-11'- and 'Lys-63'-linked polyubiquitin chains, leading to mitophagy. The PINK1-PRKN pathway also promotes fission of damaged mitochondria by PINK1-mediated phosphorylation which promotes the PRKN-dependent degradation of mitochondrial proteins involved in fission such as MFN2. This prevents the refusion of unhealthy mitochondria with the mitochondrial network or initiates mitochondrial fragmentation facilitating their later engulfment by autophagosomes. Regulates motility of damaged mitochondria via the ubiquitination and subsequent degradation of MIRO1 and MIRO2; in motor neurons, this likely inhibits mitochondrial intracellular anterograde transport along the axons which probably increases the chance of the mitochondria undergoing mitophagy in the soma. Involved in mitochondrial biogenesis via the 'Lys-48'-linked polyubiquitination of transcriptional repressor ZNF746/PARIS which leads to its subsequent proteasomal degradation and allows activation of the transcription factor PPARGC1A. Limits the production of reactive oxygen species (ROS). Regulates cyclin-E during neuronal apoptosis. In collaboration with CHPF isoform 2, may enhance cell viability and protect cells from oxidative stress. Independently of its ubiquitin ligase activity, protects from apoptosis by the transcriptional repression of p53/TP53. May protect neurons against alpha synuclein toxicity, proteasomal dysfunction, GPR37 accumulation, and kainate-induced excitotoxicity. May play a role in controlling neurotransmitter trafficking at the presynaptic terminal and in calcium-dependent exocytosis. May represent a tumor suppressor gene. This is E3 ubiquitin-protein ligase parkin from Rattus norvegicus (Rat).